Reading from the N-terminus, the 744-residue chain is Putative pre-mRNA-splicing factor ATP-dependent RNA helicase DHX32 (744 aa).

An N-acetylmethionine modification is found at M1. Residues 1–28 (MDEEELDHPNASPEKRYFPESLDSSDGD) form a disordered region. Residues 72 to 270 (MESLLQNQVV…RLIFEIHRSG (199 aa)) enclose the Helicase ATP-binding domain. 85–92 (GDSKCGKS) is an ATP binding site. The DEAH box signature appears at 185–188 (DDVH). Residues 258–438 (SVIRLIFEIH…SMVLFMKRVD (181 aa)) enclose the Helicase C-terminal domain.

This sequence belongs to the DEAD box helicase family. DEAH subfamily.

Its subcellular location is the nucleus. The protein localises to the mitochondrion. The catalysed reaction is ATP + H2O = ADP + phosphate + H(+). In Mus musculus (Mouse), this protein is Putative pre-mRNA-splicing factor ATP-dependent RNA helicase DHX32 (Dhx32).